The following is a 426-amino-acid chain: Maintenance of mitochondrial morphology protein 1 (426 aa).

Over 1–100 (MTDSENESTE…KFSGWSFAQG (100 aa)) the chain is Lumenal. Residues 101–121 (FFVGQLSIVLLFIFFLKFFIF) traverse the membrane as a helical segment. Residues 122–426 (SDEPSKSKNP…NTREEKPTEL (305 aa)) lie on the Cytoplasmic side of the membrane. Positions 194 to 409 (PAESLDWFNV…EPRFQFVRLP (216 aa)) constitute an SMP-LTD domain.

It belongs to the MMM1 family. As to quaternary structure, homodimer. Component of the ER-mitochondria encounter structure (ERMES) or MDM complex, composed of MMM1, MDM10, MDM12 and MDM34. An MMM1 homodimer associates with one molecule of MDM12 on each side in a pairwise head-to-tail manner, and the SMP-LTD domains of MMM1 and MDM12 generate a continuous hydrophobic tunnel for phospholipid trafficking.

It localises to the endoplasmic reticulum membrane. Component of the ERMES/MDM complex, which serves as a molecular tether to connect the endoplasmic reticulum (ER) and mitochondria. Components of this complex are involved in the control of mitochondrial shape and protein biogenesis, and function in nonvesicular lipid trafficking between the ER and mitochondria. The MDM12-MMM1 subcomplex functions in the major beta-barrel assembly pathway that is responsible for biogenesis of all outer membrane beta-barrel proteins, and acts in a late step after the SAM complex. The MDM10-MDM12-MMM1 subcomplex further acts in the TOM40-specific pathway after the action of the MDM12-MMM1 complex. Essential for establishing and maintaining the structure of mitochondria and maintenance of mtDNA nucleoids. The polypeptide is Maintenance of mitochondrial morphology protein 1 (Saccharomyces cerevisiae (strain AWRI1631) (Baker's yeast)).